A 109-amino-acid chain; its full sequence is MAGSIVISKEVRVPVSTSQFDYLVSRIGDQFHSSDMWIKDEVYLPMEEGGMSFISTESLNSSGLSIFLATVMRARAASQAEESFPLYENVWNQLVEKLRQDARLGVSGN.

In terms of assembly, specifically interacts with cognate toxin CdiA, which inhibits the toxin.

Immunity protein component of a toxin-immunity protein module, which functions as a cellular contact-dependent growth inhibition (CDI) system. CDI modules allow bacteria to communicate with and inhibit the growth of closely related neighboring bacteria in a contact-dependent fashion. Neutralizes the toxic activity of cognate toxin CdiA (C-terminal 160 residue CT fragment) upon expression in E.coli. Does not inhibit toxic activity of CdiA from other strains of B.pseudomallei. The protein is Immunity protein CdiI (cdiI) of Burkholderia pseudomallei (Pseudomonas pseudomallei).